Here is a 260-residue protein sequence, read N- to C-terminus: 3'-5' ssDNA/RNA exonuclease TatD (260 aa).

A divalent metal cation contacts are provided by glutamate 91, histidine 127, and histidine 152.

It belongs to the metallo-dependent hydrolases superfamily. TatD-type hydrolase family. TatD subfamily. In terms of assembly, monomer. Mg(2+) is required as a cofactor.

The protein localises to the cytoplasm. Functionally, 3'-5' exonuclease that prefers single-stranded DNA and RNA. May play a role in the H(2)O(2)-induced DNA damage repair. In Citrobacter koseri (strain ATCC BAA-895 / CDC 4225-83 / SGSC4696), this protein is 3'-5' ssDNA/RNA exonuclease TatD.